Here is a 251-residue protein sequence, read N- to C-terminus: Putative ATP-binding protein Rv3427c in insertion sequence (251 aa).

108 to 115 (GPVGVGKT) serves as a coordination point for ATP.

This sequence belongs to the IS21/IS1162 putative ATP-binding protein family.

This is Putative ATP-binding protein Rv3427c in insertion sequence from Mycobacterium tuberculosis (strain ATCC 25618 / H37Rv).